A 272-amino-acid polypeptide reads, in one-letter code: Leucoagglutinating phytohemagglutinin (272 aa).

A signal peptide spans 1 to 20 (MASSKFFTVLFLVLLTHANS). N-linked (GlcNAc...) (high mannose) asparagine glycosylation is present at asparagine 32. N-linked (GlcNAc...) (complex) asparagine glycosylation occurs at asparagine 80.

The protein belongs to the leguminous lectin family. As to quaternary structure, homotetramer. Post-translationally, N-glycosylated on Asn-80; contains xylose.

This insecticidal carbohydrate-binding lectin is toxic for the cowpea weevil. The chain is Leucoagglutinating phytohemagglutinin (DLEC2) from Phaseolus vulgaris (Kidney bean).